Consider the following 55-residue polypeptide: Large ribosomal subunit protein bL33 (55 aa).

This sequence belongs to the bacterial ribosomal protein bL33 family.

In Sphingopyxis alaskensis (strain DSM 13593 / LMG 18877 / RB2256) (Sphingomonas alaskensis), this protein is Large ribosomal subunit protein bL33.